The sequence spans 456 residues: tRNA(Ile)-lysidine synthase (456 aa).

ATP is bound at residue 27–32; that stretch reads SGGVDS.

This sequence belongs to the tRNA(Ile)-lysidine synthase family.

The protein localises to the cytoplasm. It catalyses the reaction cytidine(34) in tRNA(Ile2) + L-lysine + ATP = lysidine(34) in tRNA(Ile2) + AMP + diphosphate + H(+). Its function is as follows. Ligates lysine onto the cytidine present at position 34 of the AUA codon-specific tRNA(Ile) that contains the anticodon CAU, in an ATP-dependent manner. Cytidine is converted to lysidine, thus changing the amino acid specificity of the tRNA from methionine to isoleucine. In Vibrio atlanticus (strain LGP32) (Vibrio splendidus (strain Mel32)), this protein is tRNA(Ile)-lysidine synthase.